The sequence spans 330 residues: Glycerol-3-phosphate dehydrogenase [NAD(P)+] (330 aa).

3 residues coordinate NADPH: Trp-11, Arg-33, and Lys-105. Sn-glycerol 3-phosphate-binding residues include Lys-105, Gly-133, and Ser-135. Ala-137 provides a ligand contact to NADPH. Residues Lys-188, Asp-241, Ser-251, Arg-252, and Asn-253 each coordinate sn-glycerol 3-phosphate. The Proton acceptor role is filled by Lys-188. NADPH is bound at residue Arg-252. 2 residues coordinate NADPH: Val-276 and Glu-278.

It belongs to the NAD-dependent glycerol-3-phosphate dehydrogenase family.

Its subcellular location is the cytoplasm. The catalysed reaction is sn-glycerol 3-phosphate + NAD(+) = dihydroxyacetone phosphate + NADH + H(+). The enzyme catalyses sn-glycerol 3-phosphate + NADP(+) = dihydroxyacetone phosphate + NADPH + H(+). It functions in the pathway membrane lipid metabolism; glycerophospholipid metabolism. Functionally, catalyzes the reduction of the glycolytic intermediate dihydroxyacetone phosphate (DHAP) to sn-glycerol 3-phosphate (G3P), the key precursor for phospholipid synthesis. The polypeptide is Glycerol-3-phosphate dehydrogenase [NAD(P)+] (Acidovorax ebreus (strain TPSY) (Diaphorobacter sp. (strain TPSY))).